The chain runs to 20 residues: Brevinin-1DYa (20 aa).

Cysteines 14 and 20 form a disulfide.

As to expression, expressed by the skin glands.

The protein resides in the secreted. Functionally, antimicrobial peptide. Has low activity against the Gram-positive bacterium S.aureus and the Gram-negative bacterium E.coli (MIC&lt;15 uM). Has a strong hemolytic activity. The polypeptide is Brevinin-1DYa (Rana dybowskii (Dybovsky's frog)).